Here is a 122-residue protein sequence, read N- to C-terminus: V-type ATPase assembly factor PKR1 (122 aa).

The Cytoplasmic segment spans residues 1–20; the sequence is MANFFVRLWESVFEPGTSPQ. A helical transmembrane segment spans residues 21 to 41; the sequence is LIIATHVSFVALLLTLIWLIY. Residues 42–46 lie on the Lumenal side of the membrane; that stretch reads ATNGN. The helical transmembrane segment at 47–67 threads the bilayer; the sequence is IHFYALFCISLLLWITVIWFI. Topologically, residues 68–122 are cytoplasmic; sequence NELSHVKLKDNDELDKDANKKDDSAIKEDSEDKQESGKSTSTARRTQAQSRSRKA. The segment covering 82-103 has biased composition (basic and acidic residues); it reads DKDANKKDDSAIKEDSEDKQES. Residues 82-122 form a disordered region; sequence DKDANKKDDSAIKEDSEDKQESGKSTSTARRTQAQSRSRKA. Positions 104 to 122 are enriched in polar residues; sequence GKSTSTARRTQAQSRSRKA.

Belongs to the PKR1 family.

It is found in the endoplasmic reticulum membrane. Functions together with the other V-type ATPase assembly factors in the endoplasmic reticulum to efficiently assemble the V-type ATPase membrane sector V(0). This chain is V-type ATPase assembly factor PKR1 (PKR1), found in Saccharomyces cerevisiae (strain ATCC 204508 / S288c) (Baker's yeast).